Consider the following 1086-residue polypeptide: Auxin response factor 19 (1086 aa).

The TF-B3 DNA-binding region spans 126–228 (FCKTLTASDT…QLMLGIRRAN (103 aa)). Residues 454 to 485 (PSKLLNFQSPNLSSANSQFNKPNTVNHISQQM) show a composition bias toward polar residues. 4 disordered regions span residues 454 to 504 (PSKL…QQQQ), 545 to 564 (QSPN…QSML), 624 to 647 (LSQN…QQLQ), and 659 to 788 (QQQS…SVFE). Over residues 486–504 (QAQPAMVKSQQQQQQQQQQ) the composition is skewed to low complexity. The segment covering 659 to 697 (QQQSIPPVSSSLQPQLSALQQTQSHQLQQLLSSQNQQPL) has biased composition (low complexity). Over residues 700–710 (GNNSFPASTFM) the composition is skewed to polar residues. Residues 711-724 (QPPQIQVSPQQQGQ) show a composition bias toward low complexity. The segment covering 747-771 (SCSTSPSANNTGHDNVSPTNFLSRN) has biased composition (polar residues). Residues 772–785 (QQQGQAASVSASDS) show a composition bias toward low complexity. The 94-residue stretch at 958–1051 (RTYTKVQKRG…EVQQMSLDGD (94 aa)) folds into the PB1 domain.

Belongs to the ARF family. In terms of assembly, homodimers and heterodimers. Interacts with the auxin-responsive protein IAA1. Binds to JMJ30. Binds to ATXR2 in the nucleus.

It localises to the nucleus. Functionally, auxin response factors (ARFs) are transcriptional factors that bind specifically to the DNA sequence 5'-TGTCTC-3' found in the auxin-responsive promoter elements (AuxREs). Could act as transcriptional activator or repressor. Formation of heterodimers with Aux/IAA proteins may alter their ability to modulate early auxin response genes expression. Involved in ethylene responses. Regulates lateral root formation through direct regulation of LBD16 and/or LBD29. Functionally redundant with ARF7. Involved in cellular dedifferentiation during callus formation on callus-inducing medium (CIM) and in an ATXR2-dependent manner. In Arabidopsis thaliana (Mouse-ear cress), this protein is Auxin response factor 19.